The chain runs to 805 residues: Polycystin-2-like protein 1 (805 aa).

The segment at M1 to E59 is disordered. Over M1–E103 the chain is Cytoplasmic. Residue C38 is the site of S-palmitoyl cysteine attachment. Residues L104 to S124 traverse the membrane as a helical segment. Topologically, residues S125–E356 are extracellular. N177 and N207 each carry an N-linked (GlcNAc...) asparagine glycan. C210 and C223 are disulfide-bonded. N-linked (GlcNAc...) asparagine glycosylation occurs at N241. Residues V357–I376 form a helical membrane-spanning segment. Positions 370 and 373 each coordinate Ca(2+). Residues H377–S384 are Cytoplasmic-facing. The chain crosses the membrane as a helical span at residues I385–I405. Residues N387 and D390 each coordinate Ca(2+). Topologically, residues F406–F433 are extracellular. A helical transmembrane segment spans residues W434–F454. Residues K455–G479 lie on the Cytoplasmic side of the membrane. A helical membrane pass occupies residues F480 to F499. The Extracellular portion of the chain corresponds to G500–K511. N505 is a glycosylation site (N-linked (GlcNAc...) asparagine). Residues C512–Y526 constitute an intramembrane region (pore-forming). The Extracellular segment spans residues N527–L536. Residues G537–L557 traverse the membrane as a helical segment. Residues A558–S805 are Cytoplasmic-facing. The EF-hand domain occupies H633–E668. Coiled-coil stretches lie at residues N650–S686 and G700–R740. Residues G704–P763 are required for homooligomerization. Residues P759–S805 are disordered. Residues V780–R796 show a composition bias toward basic and acidic residues.

Belongs to the polycystin family. Oligomer. Functional PKD2L1 homotetramer can be formed either through C-terminal trimerization followed by N-terminal dimerization of a fourth subunit with a subunit in the trimer or through dimerization followed by trimerization. Heterotetramer with either PKD1L1, PKD1L3 or PKD1; the heterotetrameric complex contains three PKD1L2 chains plus one chain from another family member. Interacts with PKD1L1, forming a ciliary calcium channel. Interacts with PKD1L3, forming a cation channel that is activated by low extracellular pH. Interacts with PKD1; this heteromeric functional cation channels is opened by hypo-osmotic stimulation. Interacts with RACK1; inhibits the channel activity possibly by impairing localization to the cell membrane. In terms of processing, palmitoylation is important for expression at the cell membrane and for channel activity. In terms of tissue distribution, detected in taste bud cells in fungiform papillae (at protein level). Ubiquitous. Expressed in adult heart, skeletal muscle, brain, spleen, testis, retina and liver. Isoform 4 appears to be expressed only in transformed lymphoblasts.

It is found in the cell projection. It localises to the cilium membrane. The protein localises to the cell membrane. The protein resides in the cytoplasmic vesicle. The enzyme catalyses Ca(2+)(in) = Ca(2+)(out). It carries out the reaction Na(+)(in) = Na(+)(out). It catalyses the reaction K(+)(in) = K(+)(out). The catalysed reaction is Mg(2+)(in) = Mg(2+)(out). Its activity is regulated as follows. The non-selective cation channel is gated following an off-response property by acid: gated open after the removal of acid stimulus, but not during acid application. Channel activity is inhibited by phosphatidylinositol-4,5-bisphosphate (PIP2). Non-selective cation channel activity is substantially increased when either the extracellular or intracellular calcium-ion concentration is raised. Regulation of non-selective cation channel activity by external calcium is bimodal, first sensitizing and subsequently inactivating the current. Functionally, homotetrameric, non-selective cation channel that is permeable to sodium, potassium, magnesium and calcium. Also forms functionnal heteromeric channels with PKD1, PKD1L1 and PKD1L3. Pore-forming subunit of a heterotetrameric, non-selective cation channel, formed by PKD1L2 and PKD1L3, that is permeable to sodium, potassium, magnesium and calcium and which may act as a sour taste receptor in gustatory cells; however, its contribution to sour taste perception is unclear in vivo and may be indirect. The homomeric and heteromeric channels formed by PKD1L2 and PKD1L3 are activated by low pH and Ca(2+), but opens only when the extracellular pH rises again and after the removal of acid stimulus. Pore-forming subunit of a calcium-permeant ion channel formed by PKD1L2 and PKD1L1 in primary cilia, where it controls cilium calcium concentration, without affecting cytoplasmic calcium concentration, and regulates sonic hedgehog/SHH signaling and GLI2 transcription. The PKD1L1:PKD2L1 complex channel is mechanosensitive only at high pressures and is highly temperature sensitive. Pore-forming subunit of a calcium-permeant ion channel formed by PKD1L2 and PKD1 that produces a transient increase in intracellular calcium concentration upon hypo-osmotic stimulation (200 mOsm). May play a role in the perception of carbonation taste. May play a role in the sensory perception of water, via a mechanism that activates the channel in response to dilution of salivary bicarbonate and changes in salivary pH. This Homo sapiens (Human) protein is Polycystin-2-like protein 1.